Here is a 213-residue protein sequence, read N- to C-terminus: ATP phosphoribosyltransferase (213 aa).

The protein belongs to the ATP phosphoribosyltransferase family. Short subfamily. As to quaternary structure, heteromultimer composed of HisG and HisZ subunits.

The protein resides in the cytoplasm. The enzyme catalyses 1-(5-phospho-beta-D-ribosyl)-ATP + diphosphate = 5-phospho-alpha-D-ribose 1-diphosphate + ATP. It functions in the pathway amino-acid biosynthesis; L-histidine biosynthesis; L-histidine from 5-phospho-alpha-D-ribose 1-diphosphate: step 1/9. In terms of biological role, catalyzes the condensation of ATP and 5-phosphoribose 1-diphosphate to form N'-(5'-phosphoribosyl)-ATP (PR-ATP). Has a crucial role in the pathway because the rate of histidine biosynthesis seems to be controlled primarily by regulation of HisG enzymatic activity. This chain is ATP phosphoribosyltransferase, found in Methylococcus capsulatus (strain ATCC 33009 / NCIMB 11132 / Bath).